The primary structure comprises 130 residues: Small ribosomal subunit protein uS11c (130 aa).

The protein belongs to the universal ribosomal protein uS11 family. Part of the 30S ribosomal subunit.

It is found in the plastid. Its subcellular location is the chloroplast. The chain is Small ribosomal subunit protein uS11c from Anthoceros angustus (Hornwort).